The chain runs to 246 residues: tRNA pseudouridine synthase A (246 aa).

Asp52 acts as the Nucleophile in catalysis. Residue Tyr111 coordinates substrate.

This sequence belongs to the tRNA pseudouridine synthase TruA family. In terms of assembly, homodimer.

It carries out the reaction uridine(38/39/40) in tRNA = pseudouridine(38/39/40) in tRNA. Its function is as follows. Formation of pseudouridine at positions 38, 39 and 40 in the anticodon stem and loop of transfer RNAs. The sequence is that of tRNA pseudouridine synthase A from Parvibaculum lavamentivorans (strain DS-1 / DSM 13023 / NCIMB 13966).